A 101-amino-acid chain; its full sequence is Small ribosomal subunit protein uS14 (101 aa).

The segment at 53–72 is disordered; it reads RDAAAVRVRNRDSHDGRPRG. Positions 61-70 are enriched in basic and acidic residues; that stretch reads RNRDSHDGRP.

It belongs to the universal ribosomal protein uS14 family. As to quaternary structure, part of the 30S ribosomal subunit. Contacts proteins S3 and S10.

Binds 16S rRNA, required for the assembly of 30S particles and may also be responsible for determining the conformation of the 16S rRNA at the A site. The protein is Small ribosomal subunit protein uS14 of Corynebacterium glutamicum (strain R).